Consider the following 382-residue polypeptide: MEYHNVSSVLGNVSSVLRPDARLSAESRLLGWNVPPDELRHIPEHWLIYPEPPESMNYLLGTLYIFFTVISMIGNGLVMWVFSAAKSLRTPSNILVINLAFCDFMMMIKTPIFIYNSFHQGYALGHLGCQIFGVIGSYTGIAAGATNAFIAYDRYNVITRPMEGKMTHGKAIAMIIFIYLYATPWVVACYTESWGRFVPEGYLTSCTFDYLTDNFDTRLFVACIFFFSFVCPTTMITYYYSQIVGHVFSHEKALRDQAKKMNVDSLRSNVDKSKEAAEIRIAKAAITICFLFFASWTPYGVMSLIGAFGDKTLLTPGATMIPACTCKMVACIDPFVYAISHPRYRMELQKRCPWLAISEKAPESAAAISTSTTQEQQQTTAA.

The Extracellular portion of the chain corresponds to 1–56 (MEYHNVSSVLGNVSSVLRPDARLSAESRLLGWNVPPDELRHIPEHWLIYPEPPESM). Asn-12 carries an N-linked (GlcNAc...) asparagine glycan. The chain crosses the membrane as a helical span at residues 57–81 (NYLLGTLYIFFTVISMIGNGLVMWV). Residues 82-93 (FSAAKSLRTPSN) lie on the Cytoplasmic side of the membrane. Residues 94–118 (ILVINLAFCDFMMMIKTPIFIYNSF) form a helical membrane-spanning segment. Over 119 to 132 (HQGYALGHLGCQIF) the chain is Extracellular. A disulfide bridge links Cys-129 with Cys-206. The chain crosses the membrane as a helical span at residues 133-152 (GVIGSYTGIAAGATNAFIAY). Residues 153-170 (DRYNVITRPMEGKMTHGK) lie on the Cytoplasmic side of the membrane. A helical membrane pass occupies residues 171–195 (AIAMIIFIYLYATPWVVACYTESWG). Residues 196–219 (RFVPEGYLTSCTFDYLTDNFDTRL) are Extracellular-facing. The helical transmembrane segment at 220-247 (FVACIFFFSFVCPTTMITYYYSQIVGHV) threads the bilayer. At 248-283 (FSHEKALRDQAKKMNVDSLRSNVDKSKEAAEIRIAK) the chain is on the cytoplasmic side. A helical transmembrane segment spans residues 284-307 (AAITICFLFFASWTPYGVMSLIGA). Over 308 to 315 (FGDKTLLT) the chain is Extracellular. A helical membrane pass occupies residues 316–340 (PGATMIPACTCKMVACIDPFVYAIS). Lys-327 is subject to N6-(retinylidene)lysine. At 341–382 (HPRYRMELQKRCPWLAISEKAPESAAAISTSTTQEQQQTTAA) the chain is on the cytoplasmic side.

The protein belongs to the G-protein coupled receptor 1 family. Opsin subfamily. Post-translationally, phosphorylated on some or all of the serine and threonine residues present in the C-terminal region.

It is found in the membrane. Its function is as follows. Visual pigments are the light-absorbing molecules that mediate vision. They consist of an apoprotein, opsin, covalently linked to cis-retinal. In Drosophila pseudoobscura pseudoobscura (Fruit fly), this protein is Opsin Rh3 (Rh3).